Reading from the N-terminus, the 203-residue chain is Glutathione-specific gamma-glutamylcyclotransferase (203 aa).

12-17 (VFGYGS) contributes to the substrate binding site. Glu-105 (proton acceptor) is an active-site residue.

Belongs to the gamma-glutamylcyclotransferase family. ChaC subfamily.

It is found in the cytoplasm. It localises to the nucleus. It catalyses the reaction glutathione = L-cysteinylglycine + 5-oxo-L-proline. Its function is as follows. Gamma-glutamylcyclotransferase acting specifically on glutathione, but not on other gamma-glutamyl peptides. Allows utilization of gluthathione through subsequent cleavage of the Cys-Gly dipeptide by Cys-Gly metallodipeptidase dug1. This Schizosaccharomyces pombe (strain 972 / ATCC 24843) (Fission yeast) protein is Glutathione-specific gamma-glutamylcyclotransferase.